Consider the following 345-residue polypeptide: N-glycosylase/DNA lyase (345 aa).

N149, R154, and R204 together coordinate DNA. K249 (schiff-base intermediate with DNA) is an active-site residue. Positions 266 and 268 each coordinate 8-oxoguanine. 2 residues coordinate DNA: H270 and Q287. Residues Q315 and F319 each coordinate 8-oxoguanine. The segment covering 324–334 has biased composition (basic and acidic residues); the sequence is RQSRHAQEPPA. Residues 324-345 form a disordered region; sequence RQSRHAQEPPAKRRKGSKGPEG. Residues 335-345 show a composition bias toward basic residues; sequence KRRKGSKGPEG.

This sequence belongs to the type-1 OGG1 family. Ubiquitous.

Its subcellular location is the nucleus. The protein resides in the nucleoplasm. It localises to the nucleus speckle. The protein localises to the nucleus matrix. It is found in the mitochondrion. The enzyme catalyses 2'-deoxyribonucleotide-(2'-deoxyribose 5'-phosphate)-2'-deoxyribonucleotide-DNA = a 3'-end 2'-deoxyribonucleotide-(2,3-dehydro-2,3-deoxyribose 5'-phosphate)-DNA + a 5'-end 5'-phospho-2'-deoxyribonucleoside-DNA + H(+). DNA repair enzyme that incises DNA at 8-oxoG residues. Excises 7,8-dihydro-8-oxoguanine and 2,6-diamino-4-hydroxy-5-N-methylformamidopyrimidine (FAPY) from damaged DNA. Has a beta-lyase activity that nicks DNA 3' to the lesion. This chain is N-glycosylase/DNA lyase (OGG1), found in Homo sapiens (Human).